A 216-amino-acid chain; its full sequence is Ion-translocating oxidoreductase complex subunit G (216 aa).

Residues 14 to 34 (ALVLGSFGFLAASFVSIIYVI) form a helical membrane-spanning segment. FMN phosphoryl threonine is present on Thr181.

Belongs to the RnfG family. As to quaternary structure, the complex is composed of six subunits: RnfA, RnfB, RnfC, RnfD, RnfE and RnfG. The cofactor is FMN.

It localises to the cell inner membrane. Part of a membrane-bound complex that couples electron transfer with translocation of ions across the membrane. This Buchnera aphidicola subsp. Baizongia pistaciae (strain Bp) protein is Ion-translocating oxidoreductase complex subunit G.